Here is a 663-residue protein sequence, read N- to C-terminus: Alcohol oxidase 2 (663 aa).

8 to 38 contributes to the FAD binding site; the sequence is DILVLGGGSSGSCIAGRLANLDHSLKVGLIE. Residue His567 is the Proton acceptor of the active site. A Microbody targeting signal motif is present at residues 661–663; the sequence is ARF.

It belongs to the GMC oxidoreductase family. Homooctamer. It depends on FAD as a cofactor.

It localises to the peroxisome matrix. It catalyses the reaction a primary alcohol + O2 = an aldehyde + H2O2. It participates in energy metabolism; methane degradation. Functionally, minor isoform of alcohol oxidase, which catalyzes the oxidation of methanol to formaldehyde and hydrogen peroxide, the first step in the methanol utilization pathway of methylotrophic yeasts. The polypeptide is Alcohol oxidase 2 (AOX2) (Komagataella phaffii (strain ATCC 76273 / CBS 7435 / CECT 11047 / NRRL Y-11430 / Wegner 21-1) (Yeast)).